Consider the following 923-residue polypeptide: Protocadherin gamma-B4 (923 aa).

Residues 1-30 (MGSGAGELGRAERLPVLFLFLLSLFCPALC) form the signal peptide. 6 consecutive Cadherin domains span residues 31–133 (EQIR…TPKF), 134–242 (TQNS…APVF), 243–345 (SQDI…APEV), 346–450 (IFQS…APVF), 451–560 (SQSS…APRV), and 568–673 (DGSA…LPDI). The Extracellular portion of the chain corresponds to 31–689 (EQIRYRIPEE…SDLEAELQFY (659 aa)). N-linked (GlcNAc...) asparagine glycans are attached at residues asparagine 417 and asparagine 543. Residues 690–710 (LVVALALISVLFLVAMILAIA) form a helical membrane-spanning segment. Topologically, residues 711–923 (LRLRRSSSPA…KKKSGKKEKK (213 aa)) are cytoplasmic. 2 disordered regions span residues 797–832 (SHQQ…WPNN) and 893–923 (ATLT…KEKK). The span at 913–923 (NKKKSGKKEKK) shows a compositional bias: basic residues.

It localises to the cell membrane. In terms of biological role, potential calcium-dependent cell-adhesion protein. May be involved in the establishment and maintenance of specific neuronal connections in the brain. In Pan troglodytes (Chimpanzee), this protein is Protocadherin gamma-B4 (PCDHGB4).